Consider the following 432-residue polypeptide: Adenylosuccinate synthetase (432 aa).

Residues 13–19 (GDEGKGK) and 41–43 (GHT) contribute to the GTP site. Aspartate 14 (proton acceptor) is an active-site residue. Mg(2+) contacts are provided by aspartate 14 and glycine 41. Residues 14-17 (DEGK), 39-42 (NAGH), threonine 130, arginine 144, glutamine 225, threonine 240, and arginine 304 each bind IMP. Histidine 42 functions as the Proton donor in the catalytic mechanism. 300–306 (ATTGRSR) serves as a coordination point for substrate. GTP-binding positions include arginine 306, 332–334 (KLD), and 415–417 (STG).

Belongs to the adenylosuccinate synthetase family. Homodimer. The cofactor is Mg(2+).

It is found in the cytoplasm. It catalyses the reaction IMP + L-aspartate + GTP = N(6)-(1,2-dicarboxyethyl)-AMP + GDP + phosphate + 2 H(+). Its pathway is purine metabolism; AMP biosynthesis via de novo pathway; AMP from IMP: step 1/2. Functionally, plays an important role in the de novo pathway of purine nucleotide biosynthesis. Catalyzes the first committed step in the biosynthesis of AMP from IMP. The sequence is that of Adenylosuccinate synthetase from Proteus mirabilis (strain HI4320).